Reading from the N-terminus, the 501-residue chain is Sucrose transport protein SUT2 (501 aa).

Over 1 to 31 (MPRRPSGGGGGAGPAAAAVRKVPLRKLLRAA) the chain is Cytoplasmic. The helical transmembrane segment at 32 to 52 (SVACGVQFGWALQLSLLTPYV) threads the bilayer. Residues 53–55 (QEL) lie on the Extracellular side of the membrane. The chain crosses the membrane as a helical span at residues 56–76 (GIPHAFASLVWLCGPLSGLLV). Residues 77-98 (QPLVGHLSDRIAPAASPLGRRR) lie on the Cytoplasmic side of the membrane. The chain crosses the membrane as a helical span at residues 99–119 (PFIAAGAASIAAAVLTVGFSA). The Extracellular portion of the chain corresponds to 120–135 (DLGRIFGDSITPGSTR). The chain crosses the membrane as a helical span at residues 136-156 (LGAIIVYLVGFWLLDVGNNAT). Topologically, residues 157–176 (QGPCRAFLADLTENDPRRTR) are cytoplasmic. Residues 177-197 (IANAYFSLFMALGNILGYATG) form a helical membrane-spanning segment. Residues 198 to 222 (AYSGWYKIFPFTVTPSCSISCANLK) lie on the Extracellular side of the membrane. The helical transmembrane segment at 223 to 243 (SAFLLDIIILVVTTCITVASV) threads the bilayer. At 244–278 (QEPQSFGSDEADHPSTEQEAFLWELFGSFRYFTLP) the chain is on the cytoplasmic side. Residues 279 to 299 (VWMVLIVTALTWIGWFPFILF) traverse the membrane as a helical segment. Residues 300–327 (DTDWMGREIYRGSPDDPSITQSYHDGVR) lie on the Extracellular side of the membrane. Residues 328–348 (MGSFGLMLNSVLLGFTSIVLE) traverse the membrane as a helical segment. The Cytoplasmic segment spans residues 349–356 (KLCRKWGA). Residues 357–377 (GLVWGVSNILMALCFVAMLVI) traverse the membrane as a helical segment. The Extracellular portion of the chain corresponds to 378–394 (TYVAKNMDYPPSGVPPT). The helical transmembrane segment at 395–415 (GIVIASLVVFTILGAPLAITY) threads the bilayer. At 416–433 (SIPYAMAASRVENLGLGQ) the chain is on the cytoplasmic side. Residues 434 to 454 (GLAMGILNLAIVIPQVIVSLG) form a helical membrane-spanning segment. The Extracellular portion of the chain corresponds to 455-467 (SGPWDQLFGGGNA). Residues 468–488 (PAFAVAAAASFIGGLVAILGL) traverse the membrane as a helical segment. At 489–501 (PRARIASRRRGHR) the chain is on the cytoplasmic side.

It belongs to the glycoside-pentoside-hexuronide (GPH) cation symporter transporter (TC 2.A.2.4) family. In terms of assembly, homodimer. Widely expressed.

Its subcellular location is the cell membrane. It participates in glycan biosynthesis; sucrose metabolism. Responsible for the transport of sucrose into the cell, with the concomitant uptake of protons (symport system). May also transport other glucosides. In Oryza sativa subsp. japonica (Rice), this protein is Sucrose transport protein SUT2 (SUT2).